The sequence spans 100 residues: Urease subunit gamma (100 aa).

This sequence belongs to the urease gamma subunit family. Heterotrimer of UreA (gamma), UreB (beta) and UreC (alpha) subunits. Three heterotrimers associate to form the active enzyme.

It localises to the cytoplasm. It catalyses the reaction urea + 2 H2O + H(+) = hydrogencarbonate + 2 NH4(+). It functions in the pathway nitrogen metabolism; urea degradation; CO(2) and NH(3) from urea (urease route): step 1/1. The polypeptide is Urease subunit gamma (Streptomyces griseus subsp. griseus (strain JCM 4626 / CBS 651.72 / NBRC 13350 / KCC S-0626 / ISP 5235)).